A 508-amino-acid polypeptide reads, in one-letter code: CUGBP Elav-like family member 2 (508 aa).

Necessary for RNA-binding, TNNT2 exon 5 and NMDA R1 exon 21 inclusion regions lie at residues 1-283 (MRCP…LQNL) and 357-508 (LAGM…SKPY). RRM domains lie at 40-123 (IKMF…PADS), 132-212 (RKLF…FADT), and 423-501 (ANLF…LKRS).

It belongs to the CELF/BRUNOL family. In terms of assembly, interacts with A1CF. Expressed in tongue, spleen and brain (at protein level). Expressed in liver, thigh, stomach, lung and heart to very low levels (at protein level). Expressed in heart, brain, lung and muscle.

The protein localises to the nucleus. The protein resides in the cytoplasm. In terms of biological role, RNA-binding protein implicated in the regulation of several post-transcriptional events. Involved in pre-mRNA alternative splicing, mRNA translation and stability. Mediates exon inclusion and/or exclusion in pre-mRNA that are subject to tissue-specific and developmentally regulated alternative splicing. Specifically activates exon 5 inclusion of TNNT2 in embryonic, but not adult, skeletal muscle. Activates TNNT2 exon 5 inclusion by antagonizing the repressive effect of PTB. Acts both as an activator and as a repressor of a pair of coregulated exons: promotes inclusion of the smooth muscle (SM) exon but exclusion of the non-muscle (NM) exon in actinin pre-mRNAs. Promotes inclusion of exonS 21 and exclusion of exon 5 of the NMDA receptor R1 pre-mRNA. Involved in the apoB RNA editing activity. Increases COX2 mRNA stability and inhibits COX2 mRNA translation in epithelial cells after radiation injury. Modulates the cellular apoptosis program by regulating COX2-mediated prostaglandin E2 (PGE2) expression. Binds to (CUG)n triplet repeats in the 3'-UTR of transcripts such as DMPK. Binds to the muscle-specific splicing enhancer (MSE) intronic sites flanking the TNNT2 alternative exon 5. Binds preferentially to UG-rich sequences, in particular UG repeat and UGUU motifs. Binds to apoB mRNA, specifically to AU-rich sequences located immediately upstream of the edited cytidine. Binds AU-rich sequences in the 3'-UTR of COX2 mRNA. Binds to an intronic RNA element responsible for the silencing of exon 21 splicing. Binds to (CUG)n repeats. May be a specific regulator of miRNA biogenesis. Binds to primary microRNA pri-MIR140 and, with CELF1, negatively regulates the processing to mature miRNA. The chain is CUGBP Elav-like family member 2 (Celf2) from Mus musculus (Mouse).